Consider the following 197-residue polypeptide: ATP-dependent Clp protease proteolytic subunit (197 aa).

Catalysis depends on Ser98, which acts as the Nucleophile. His123 is an active-site residue.

Belongs to the peptidase S14 family. As to quaternary structure, fourteen ClpP subunits assemble into 2 heptameric rings which stack back to back to give a disk-like structure with a central cavity, resembling the structure of eukaryotic proteasomes.

The protein localises to the cytoplasm. The catalysed reaction is Hydrolysis of proteins to small peptides in the presence of ATP and magnesium. alpha-casein is the usual test substrate. In the absence of ATP, only oligopeptides shorter than five residues are hydrolyzed (such as succinyl-Leu-Tyr-|-NHMec, and Leu-Tyr-Leu-|-Tyr-Trp, in which cleavage of the -Tyr-|-Leu- and -Tyr-|-Trp bonds also occurs).. In terms of biological role, cleaves peptides in various proteins in a process that requires ATP hydrolysis. Has a chymotrypsin-like activity. Plays a major role in the degradation of misfolded proteins. The protein is ATP-dependent Clp protease proteolytic subunit of Lysinibacillus sphaericus (strain C3-41).